Reading from the N-terminus, the 155-residue chain is MSAKDPSRGLLVSPIKNGTVIDHITAGEALNVLRILGITGSTRECLSIATNVESKRMGKKDIVKIENRELRTEEVDRIALLAPQAKINIIRNYKVVEKKGVEIPEVIRGVVRCPNPGCITNTDEPVASTFEVLDKGLHCLYCDWLIKDDIANHII.

Cys113, Cys118, Cys139, and Cys142 together coordinate Zn(2+).

Belongs to the PyrI family. In terms of assembly, contains catalytic and regulatory chains. It depends on Zn(2+) as a cofactor.

Involved in allosteric regulation of aspartate carbamoyltransferase. The chain is Aspartate carbamoyltransferase regulatory chain from Methanoculleus marisnigri (strain ATCC 35101 / DSM 1498 / JR1).